A 408-amino-acid polypeptide reads, in one-letter code: Beta-ureidopropionase (408 aa).

The CN hydrolase domain maps to 90–360; sequence VRVGLIQNSI…DGLLISDMDL (271 aa). The active-site Proton acceptor is the E137. Catalysis depends on K212, which acts as the Proton donor. C249 functions as the Nucleophile in the catalytic mechanism.

It belongs to the carbon-nitrogen hydrolase superfamily. BUP family. Homodimer, homotetramer, homooctamer; can also form higher homooligomers.

The protein localises to the cytoplasm. The enzyme catalyses 3-(carbamoylamino)propanoate + H2O + 2 H(+) = beta-alanine + NH4(+) + CO2. It carries out the reaction 3-(carbamoylamino)-2-methylpropanoate + H2O + 2 H(+) = (R)-3-amino-2-methylpropanoate + NH4(+) + CO2. The protein operates within amino-acid biosynthesis; beta-alanine biosynthesis. Its function is as follows. Catalyzes a late step in pyrimidine degradation. Converts N-carbamoyl-beta-aminoisobutyrate and N-carbamoyl-beta-alanine (3-ureidopropanoate) to, respectively, beta-aminoisobutyrate and beta-alanine, ammonia and carbon dioxide. Involved in the recycling of nitrogen from nucleobases to general nitrogen metabolism. The polypeptide is Beta-ureidopropionase (Arabidopsis thaliana (Mouse-ear cress)).